Consider the following 580-residue polypeptide: Arginine--tRNA ligase (580 aa).

The 'HIGH' region signature appears at 131–141; that stretch reads ANPTGPLHVGH.

It belongs to the class-I aminoacyl-tRNA synthetase family. Monomer.

The protein resides in the cytoplasm. The enzyme catalyses tRNA(Arg) + L-arginine + ATP = L-arginyl-tRNA(Arg) + AMP + diphosphate. The chain is Arginine--tRNA ligase from Roseobacter denitrificans (strain ATCC 33942 / OCh 114) (Erythrobacter sp. (strain OCh 114)).